The chain runs to 86 residues: Weak neurotoxin 9 (86 aa).

Positions 1-21 are cleaved as a signal peptide; sequence MKTLLLTLVVVTIVCLDLGYT. Intrachain disulfides connect Cys24–Cys45, Cys27–Cys32, Cys38–Cys63, Cys67–Cys78, and Cys79–Cys84.

It belongs to the three-finger toxin family. Ancestral subfamily. Orphan group II sub-subfamily. In terms of tissue distribution, expressed by the venom gland.

It is found in the secreted. Its function is as follows. Binds with low affinity to muscular (alpha-1-beta-1-delta-epsilon/CHRNA1-CHRNB1-CHRND-CHRNE) and very low affinity to neuronal (alpha-7/CHRNA7) nicotinic acetylcholine receptor (nAChR). The protein is Weak neurotoxin 9 of Naja sputatrix (Malayan spitting cobra).